The primary structure comprises 176 residues: NADH:riboflavin 5'-phosphate oxidoreductase (176 aa).

Provides the reduced form of flavin mononucleotide for the PIIA synthase reaction. This Streptomyces pristinaespiralis protein is NADH:riboflavin 5'-phosphate oxidoreductase (snaC).